We begin with the raw amino-acid sequence, 91 residues long: Auxin-responsive protein SAUR20 (91 aa).

The protein belongs to the ARG7 family.

Its subcellular location is the cell membrane. Functionally, functions as a positive effector of cell expansion through modulation of auxin transport. This chain is Auxin-responsive protein SAUR20, found in Arabidopsis thaliana (Mouse-ear cress).